Reading from the N-terminus, the 235-residue chain is Octanoyltransferase (235 aa).

Residues 30-214 enclose the BPL/LPL catalytic domain; sequence NELEDTLLLL…YFGKVFGAKF (185 aa). Substrate contacts are provided by residues 75–82, 144–146, and 157–159; these read RGGDVTYH, AIG, and GFA. The active-site Acyl-thioester intermediate is the cysteine 175.

This sequence belongs to the LipB family.

The protein localises to the cytoplasm. The catalysed reaction is octanoyl-[ACP] + L-lysyl-[protein] = N(6)-octanoyl-L-lysyl-[protein] + holo-[ACP] + H(+). It participates in protein modification; protein lipoylation via endogenous pathway; protein N(6)-(lipoyl)lysine from octanoyl-[acyl-carrier-protein]: step 1/2. Its function is as follows. Catalyzes the transfer of endogenously produced octanoic acid from octanoyl-acyl-carrier-protein onto the lipoyl domains of lipoate-dependent enzymes. Lipoyl-ACP can also act as a substrate although octanoyl-ACP is likely to be the physiological substrate. This Caldicellulosiruptor saccharolyticus (strain ATCC 43494 / DSM 8903 / Tp8T 6331) protein is Octanoyltransferase.